We begin with the raw amino-acid sequence, 151 residues long: Transcriptional regulator MraZ (151 aa).

SpoVT-AbrB domains follow at residues 5-52 (ANAI…PLDE) and 81-124 (AVDL…DEDA).

It belongs to the MraZ family. Forms oligomers.

It localises to the cytoplasm. It is found in the nucleoid. The chain is Transcriptional regulator MraZ from Pseudomonas fluorescens (strain ATCC BAA-477 / NRRL B-23932 / Pf-5).